Here is a 336-residue protein sequence, read N- to C-terminus: Dihydroorotate dehydrogenase (quinone) (336 aa).

Residues 62–66 (AGLDK) and threonine 86 contribute to the FMN site. Lysine 66 contacts substrate. 111–115 (NRMGF) provides a ligand contact to substrate. Residues asparagine 139 and asparagine 172 each contribute to the FMN site. Substrate is bound at residue asparagine 172. Serine 175 functions as the Nucleophile in the catalytic mechanism. Asparagine 177 contributes to the substrate binding site. FMN is bound by residues lysine 217 and threonine 245. A substrate-binding site is contributed by 246 to 247 (NT). FMN contacts are provided by residues glycine 268, glycine 297, and 318–319 (YS).

This sequence belongs to the dihydroorotate dehydrogenase family. Type 2 subfamily. Monomer. It depends on FMN as a cofactor.

It localises to the cell membrane. The enzyme catalyses (S)-dihydroorotate + a quinone = orotate + a quinol. It participates in pyrimidine metabolism; UMP biosynthesis via de novo pathway; orotate from (S)-dihydroorotate (quinone route): step 1/1. Catalyzes the conversion of dihydroorotate to orotate with quinone as electron acceptor. The chain is Dihydroorotate dehydrogenase (quinone) from Serratia proteamaculans (strain 568).